Consider the following 473-residue polypeptide: Siroheme synthase (473 aa).

Positions 1–203 (MTLFPIFADL…QQPGLAEQEL (203 aa)) are precorrin-2 dehydrogenase /sirohydrochlorin ferrochelatase. NAD(+)-binding positions include 22–23 (AV) and 43–44 (PR). Serine 128 bears the Phosphoserine mark. Residues 216-473 (GSVVLVGAGP…GLPGPQALAA (258 aa)) are uroporphyrinogen-III C-methyltransferase. S-adenosyl-L-methionine is bound at residue proline 225. The active-site Proton acceptor is the aspartate 248. The active-site Proton donor is the lysine 270. Residues 302–304 (GGD), isoleucine 307, 332–333 (TA), methionine 384, and glycine 413 contribute to the S-adenosyl-L-methionine site.

This sequence in the N-terminal section; belongs to the precorrin-2 dehydrogenase / sirohydrochlorin ferrochelatase family. In the C-terminal section; belongs to the precorrin methyltransferase family.

It catalyses the reaction uroporphyrinogen III + 2 S-adenosyl-L-methionine = precorrin-2 + 2 S-adenosyl-L-homocysteine + H(+). It carries out the reaction precorrin-2 + NAD(+) = sirohydrochlorin + NADH + 2 H(+). The catalysed reaction is siroheme + 2 H(+) = sirohydrochlorin + Fe(2+). The protein operates within cofactor biosynthesis; adenosylcobalamin biosynthesis; precorrin-2 from uroporphyrinogen III: step 1/1. Its pathway is cofactor biosynthesis; adenosylcobalamin biosynthesis; sirohydrochlorin from precorrin-2: step 1/1. It participates in porphyrin-containing compound metabolism; siroheme biosynthesis; precorrin-2 from uroporphyrinogen III: step 1/1. It functions in the pathway porphyrin-containing compound metabolism; siroheme biosynthesis; siroheme from sirohydrochlorin: step 1/1. The protein operates within porphyrin-containing compound metabolism; siroheme biosynthesis; sirohydrochlorin from precorrin-2: step 1/1. Its function is as follows. Multifunctional enzyme that catalyzes the SAM-dependent methylations of uroporphyrinogen III at position C-2 and C-7 to form precorrin-2 via precorrin-1. Then it catalyzes the NAD-dependent ring dehydrogenation of precorrin-2 to yield sirohydrochlorin. Finally, it catalyzes the ferrochelation of sirohydrochlorin to yield siroheme. This Bordetella pertussis (strain Tohama I / ATCC BAA-589 / NCTC 13251) protein is Siroheme synthase.